We begin with the raw amino-acid sequence, 931 residues long: Bifunctional uridylyltransferase/uridylyl-removing enzyme (931 aa).

Residues 1-383 (MDLATTNDAA…RPGTELRRVP (383 aa)) form a uridylyltransferase region. Residues 384 to 739 (EGDDFIIDNN…VGFDEARGVT (356 aa)) are uridylyl-removing. The HD domain maps to 499–622 (VDEHLLRCIG…VQSVEQMKLL (124 aa)). ACT domains lie at 740–822 (ELTI…VVAR) and 851–931 (VIEV…QSVG).

The protein belongs to the GlnD family. Requires Mg(2+) as cofactor.

The enzyme catalyses [protein-PII]-L-tyrosine + UTP = [protein-PII]-uridylyl-L-tyrosine + diphosphate. The catalysed reaction is [protein-PII]-uridylyl-L-tyrosine + H2O = [protein-PII]-L-tyrosine + UMP + H(+). With respect to regulation, uridylyltransferase (UTase) activity is inhibited by glutamine, while glutamine activates uridylyl-removing (UR) activity. Functionally, modifies, by uridylylation and deuridylylation, the PII regulatory proteins (GlnB and homologs), in response to the nitrogen status of the cell that GlnD senses through the glutamine level. Under low glutamine levels, catalyzes the conversion of the PII proteins and UTP to PII-UMP and PPi, while under higher glutamine levels, GlnD hydrolyzes PII-UMP to PII and UMP (deuridylylation). Thus, controls uridylylation state and activity of the PII proteins, and plays an important role in the regulation of nitrogen assimilation and metabolism. The chain is Bifunctional uridylyltransferase/uridylyl-removing enzyme from Nitrobacter hamburgensis (strain DSM 10229 / NCIMB 13809 / X14).